A 351-amino-acid chain; its full sequence is Blue-sensitive opsin (351 aa).

Topologically, residues 1-40 (MKQVPEFHEDFYIPIPLDINNLSAYSPFLVPQDHLGNQGI) are extracellular. The N-linked (GlcNAc...) asparagine glycan is linked to Asn21. A helical transmembrane segment spans residues 41-65 (FMAMSVFMFFIFIGGASINILTILC). Residues 66 to 77 (TIQFKKLRSHLN) lie on the Cytoplasmic side of the membrane. Residues 78–103 (YILVNLSIANLFVAIFGSPLSFYSFF) form a helical membrane-spanning segment. Over 104-117 (NRYFIFGATACKIE) the chain is Extracellular. Cys114 and Cys191 are disulfide-bonded. The helical transmembrane segment at 118–137 (GFLATLGGMVGLWSLAVVAF) threads the bilayer. At 138-156 (ERWLVICKPLGNFTFKTPH) the chain is on the cytoplasmic side. A helical membrane pass occupies residues 157 to 180 (AIAGCILPWISALAASLPPLFGWS). The Extracellular segment spans residues 181–206 (RYIPEGLQCSCGPDWYTTNNKYNNES). The chain crosses the membrane as a helical span at residues 207-234 (YVMFLFCFCFAVPFGTIVFCYGQLLITL). The Cytoplasmic portion of the chain corresponds to 235-256 (KLAAKAQADSASTQKAEREVTK). The helical transmembrane segment at 257–280 (MVVVMVLGFLVCWAPYASFSLWIV) threads the bilayer. Residues 281–288 (SHRGEEFD) lie on the Extracellular side of the membrane. The chain crosses the membrane as a helical span at residues 289 to 313 (LRMATIPSCLSKASTVYNPVIYVLM). Position 300 is an N6-(retinylidene)lysine (Lys300). Residues 314–351 (NKQFRSCMMKMVCGKNIEEDEASTSSQVTQVSSVAPEK) lie on the Cytoplasmic side of the membrane.

This sequence belongs to the G-protein coupled receptor 1 family. Opsin subfamily. Post-translationally, phosphorylated on some or all of the serine and threonine residues present in the C-terminal region. The color pigments are found in the cone photoreceptor cells.

Its subcellular location is the membrane. Functionally, visual pigments are the light-absorbing molecules that mediate vision. They consist of an apoprotein, opsin, covalently linked to cis-retinal. The protein is Blue-sensitive opsin of Carassius auratus (Goldfish).